The sequence spans 310 residues: Homoserine kinase (310 aa).

Residue 91–101 (PIGSGLGSSAC) participates in ATP binding.

Belongs to the GHMP kinase family. Homoserine kinase subfamily.

The protein resides in the cytoplasm. The enzyme catalyses L-homoserine + ATP = O-phospho-L-homoserine + ADP + H(+). Its pathway is amino-acid biosynthesis; L-threonine biosynthesis; L-threonine from L-aspartate: step 4/5. In terms of biological role, catalyzes the ATP-dependent phosphorylation of L-homoserine to L-homoserine phosphate. In Escherichia coli (strain K12 / MC4100 / BW2952), this protein is Homoserine kinase.